The primary structure comprises 192 residues: Ion-translocating oxidoreductase complex subunit A (192 aa).

The next 6 membrane-spanning stretches (helical) occupy residues 5–25 (ILLI…FLGL), 39–59 (VGMG…AYLV), 63–83 (ILIP…VIAV), 102–122 (LLGI…VALL), 134–154 (VVYG…FAAL), and 171–191 (SIAL…TGLV).

This sequence belongs to the NqrDE/RnfAE family. In terms of assembly, the complex is composed of six subunits: RnfA, RnfB, RnfC, RnfD, RnfE and RnfG.

It is found in the cell inner membrane. Its function is as follows. Part of a membrane-bound complex that couples electron transfer with translocation of ions across the membrane. The sequence is that of Ion-translocating oxidoreductase complex subunit A from Haemophilus influenzae (strain ATCC 51907 / DSM 11121 / KW20 / Rd).